A 436-amino-acid polypeptide reads, in one-letter code: Glutamyl-tRNA reductase (436 aa).

Substrate is bound by residues T50–R53, S110, E115–Q117, and Q121. The Nucleophile role is filled by C51. G190–S195 is an NADP(+) binding site.

The protein belongs to the glutamyl-tRNA reductase family. Homodimer.

It catalyses the reaction (S)-4-amino-5-oxopentanoate + tRNA(Glu) + NADP(+) = L-glutamyl-tRNA(Glu) + NADPH + H(+). Its pathway is porphyrin-containing compound metabolism; protoporphyrin-IX biosynthesis; 5-aminolevulinate from L-glutamyl-tRNA(Glu): step 1/2. Its function is as follows. Catalyzes the NADPH-dependent reduction of glutamyl-tRNA(Glu) to glutamate 1-semialdehyde (GSA). This chain is Glutamyl-tRNA reductase, found in Wolinella succinogenes (strain ATCC 29543 / DSM 1740 / CCUG 13145 / JCM 31913 / LMG 7466 / NCTC 11488 / FDC 602W) (Vibrio succinogenes).